A 316-amino-acid chain; its full sequence is Ribosomal RNA small subunit methyltransferase H (316 aa).

Residues 35–37 (GGH), Asp55, Phe79, Asp101, and Gln108 each bind S-adenosyl-L-methionine.

Belongs to the methyltransferase superfamily. RsmH family.

The protein resides in the cytoplasm. It catalyses the reaction cytidine(1402) in 16S rRNA + S-adenosyl-L-methionine = N(4)-methylcytidine(1402) in 16S rRNA + S-adenosyl-L-homocysteine + H(+). Functionally, specifically methylates the N4 position of cytidine in position 1402 (C1402) of 16S rRNA. This chain is Ribosomal RNA small subunit methyltransferase H, found in Vibrio vulnificus (strain CMCP6).